We begin with the raw amino-acid sequence, 665 residues long: UvrABC system protein B (665 aa).

Residues 25-178 enclose the Helicase ATP-binding domain; sequence ASLQAEHRFQ…RQLLRDLTTI (154 aa). An ATP-binding site is contributed by 38-45; the sequence is GATGTGKT. The Beta-hairpin signature appears at 91–114; that stretch reads YYDYYQPEAYIPVTDTYIEKTAAI. In terms of domain architecture, Helicase C-terminal spans 429–595; sequence QVDDLLGEVR…PIVKKASNAI (167 aa). Residues 626-661 form the UVR domain; it reads PELITQLEAQMKEAAKKLEFEEAAKYRDRIKQLRDK.

The protein belongs to the UvrB family. Forms a heterotetramer with UvrA during the search for lesions. Interacts with UvrC in an incision complex.

It is found in the cytoplasm. Functionally, the UvrABC repair system catalyzes the recognition and processing of DNA lesions. A damage recognition complex composed of 2 UvrA and 2 UvrB subunits scans DNA for abnormalities. Upon binding of the UvrA(2)B(2) complex to a putative damaged site, the DNA wraps around one UvrB monomer. DNA wrap is dependent on ATP binding by UvrB and probably causes local melting of the DNA helix, facilitating insertion of UvrB beta-hairpin between the DNA strands. Then UvrB probes one DNA strand for the presence of a lesion. If a lesion is found the UvrA subunits dissociate and the UvrB-DNA preincision complex is formed. This complex is subsequently bound by UvrC and the second UvrB is released. If no lesion is found, the DNA wraps around the other UvrB subunit that will check the other stand for damage. This chain is UvrABC system protein B, found in Cyanothece sp. (strain PCC 7425 / ATCC 29141).